The chain runs to 560 residues: 5'-nucleotidase (560 aa).

The first 21 residues, 1–21 (MNQRLIIKTALSAAILASLAG), serve as a signal peptide directing secretion. Cys-22 carries N-palmitoyl cysteine lipidation. Residue Cys-22 is the site of S-diacylglycerol cysteine attachment. The a divalent metal cation site is built by Asp-45, His-47, Asp-88, Asn-120, His-221, His-256, and Gln-258. Substrate is bound by residues Phe-432 and 501–507 (YNASGGD).

It belongs to the 5'-nucleotidase family. The cofactor is chloride. Requires Mg(2+) as cofactor.

It localises to the cell outer membrane. It catalyses the reaction a ribonucleoside 5'-phosphate + H2O = a ribonucleoside + phosphate. Its function is as follows. Degradation of extracellular 5'-nucleotides for nutritional needs. This is 5'-nucleotidase (nutA) from Vibrio parahaemolyticus serotype O3:K6 (strain RIMD 2210633).